We begin with the raw amino-acid sequence, 232 residues long: Lipid A 1-phosphatase (232 aa).

Helical transmembrane passes span 10 to 30 (LFITINAVALSMLLFDAPVGA), 42 to 62 (ELLTGFGDSAWLICISILLFF), 80 to 100 (ALYVSWIGAYLFTTVVFSGLL), 136 to 156 (FPSGHSTTVGAFFAAFALLFP), 160 to 180 (VAFIACAIWLGMTRVMVGAHY), and 183 to 203 (DVIAGLAFGGWFSLLTAIVYA).

This sequence belongs to the lipid A LpxE 1-phosphatase family.

It localises to the cell inner membrane. The protein operates within bacterial outer membrane biogenesis; LPS lipid A biosynthesis. Probably removes the 1-phosphate moiety from lipid A species. Does not seem to act on other membrane components, nor does it dephosphorylate the 4'-phosphate group of lipid A and/or lipid A precursors. The protein is Lipid A 1-phosphatase of Rhizobium etli (strain ATCC 51251 / DSM 11541 / JCM 21823 / NBRC 15573 / CFN 42).